The sequence spans 286 residues: Beta-lactamase SHV-1 (286 aa).

Positions 1–21 (MRYIRLCIISLLATLPLAVHA) are cleaved as a signal peptide. Ser66 (acyl-ester intermediate) is an active-site residue. Cysteines 73 and 119 form a disulfide. The active-site Proton acceptor is the Glu164. 230–232 (KTG) lines the substrate pocket.

It belongs to the class-A beta-lactamase family.

The enzyme catalyses a beta-lactam + H2O = a substituted beta-amino acid. The chain is Beta-lactamase SHV-1 (bla) from Escherichia coli.